Reading from the N-terminus, the 153-residue chain is Ribosome maturation factor RimP (153 aa).

Belongs to the RimP family.

The protein resides in the cytoplasm. In terms of biological role, required for maturation of 30S ribosomal subunits. The polypeptide is Ribosome maturation factor RimP (Pelotomaculum thermopropionicum (strain DSM 13744 / JCM 10971 / SI)).